A 431-amino-acid chain; its full sequence is Protein SHQ1 homolog (431 aa).

It belongs to the SHQ1 family.

Required for the quantitative accumulation of H/ACA ribonucleoproteins (RNPs). In Caenorhabditis elegans, this protein is Protein SHQ1 homolog.